The sequence spans 330 residues: PTS system mannose-specific EIIAB component (330 aa).

Positions 2-130 (GIGIIIASHG…NIIKESKDGI (129 aa)) constitute a PTS EIIA type-4 domain. His-10 serves as the catalytic Tele-phosphohistidine intermediate; for EIIA activity. Phosphohistidine; by HPr is present on His-10. The interval 143 to 161 (TAATEKVVNALQGAIPAGT) is hinge. Residues 166-330 (GKLKINLARV…FELIQKANIK (165 aa)) enclose the PTS EIIB type-4 domain. The active-site Pros-phosphohistidine intermediate; for EIIB activity is His-181. A Phosphohistidine; by EIIA modification is found at His-181.

As to quaternary structure, homodimer.

The protein resides in the cytoplasm. It localises to the cell membrane. The enzyme catalyses D-mannose(out) + N(pros)-phospho-L-histidyl-[protein] = D-mannose 6-phosphate(in) + L-histidyl-[protein]. The phosphoenolpyruvate-dependent sugar phosphotransferase system (sugar PTS), a major carbohydrate active transport system, catalyzes the phosphorylation of incoming sugar substrates concomitantly with their translocation across the cell membrane. The enzyme II ManXYZ PTS system is involved in mannose transport. This chain is PTS system mannose-specific EIIAB component, found in Streptococcus pyogenes serotype M6 (strain ATCC BAA-946 / MGAS10394).